A 380-amino-acid chain; its full sequence is E3 ubiquitin-protein ligase Iruka (380 aa).

The disordered stretch occupies residues 50–92; the sequence is APEMDSSTAGASGSARSGSSGSGSSGSHDTLSRGSSSSGSQVN. 2 stretches are compositionally biased toward low complexity: residues 55 to 68 and 74 to 89; these read SSTAGASGSARSGS and SGSHDTLSRGSSSSGS. The RING-type; atypical zinc finger occupies 253-294; that stretch reads CSICWDDFKIDETVRKLPCSHLYHENCIVPWLNLHSTCPICR. The interval 317–367 is disordered; that stretch reads EMAADGSNSERRSASTATGTDNPSPANNPSQAAAEGGRTRPDANPAQAARN. The segment covering 338–350 has biased composition (low complexity); that stretch reads NPSPANNPSQAAA.

As to quaternary structure, interacts (via N-terminus) with CG7546 (via Ubl domain).

The catalysed reaction is S-ubiquitinyl-[E2 ubiquitin-conjugating enzyme]-L-cysteine + [acceptor protein]-L-lysine = [E2 ubiquitin-conjugating enzyme]-L-cysteine + N(6)-ubiquitinyl-[acceptor protein]-L-lysine.. It functions in the pathway protein modification; protein ubiquitination. In terms of biological role, E3 ubiquitin-protein ligase that mediates E2-dependent, 'Lys-48'- and/or 'Lys-63'-linked polyubiquitination of substrates. Recognizes miRNA-empty Ago1 and triggers its degradation via polyubiquitination independently of the Bag6 complex. By targeting miRNA-empty Ago1, eliminates dysfunctional Ago1 not able to bind miRNA and thereby plays a role in the quality control of miRNA-mediated silencing. The sequence is that of E3 ubiquitin-protein ligase Iruka from Drosophila melanogaster (Fruit fly).